Reading from the N-terminus, the 268-residue chain is Tryptophan synthase alpha chain (268 aa).

Catalysis depends on proton acceptor residues glutamate 49 and aspartate 60.

The protein belongs to the TrpA family. As to quaternary structure, tetramer of two alpha and two beta chains.

It catalyses the reaction (1S,2R)-1-C-(indol-3-yl)glycerol 3-phosphate + L-serine = D-glyceraldehyde 3-phosphate + L-tryptophan + H2O. It participates in amino-acid biosynthesis; L-tryptophan biosynthesis; L-tryptophan from chorismate: step 5/5. Functionally, the alpha subunit is responsible for the aldol cleavage of indoleglycerol phosphate to indole and glyceraldehyde 3-phosphate. This chain is Tryptophan synthase alpha chain, found in Shigella boydii serotype 18 (strain CDC 3083-94 / BS512).